A 253-amino-acid chain; its full sequence is Triosephosphate isomerase (253 aa).

9 to 11 (NWK) is a binding site for substrate. H96 functions as the Electrophile in the catalytic mechanism. E168 acts as the Proton acceptor in catalysis. Substrate-binding positions include G174, S213, and 234-235 (GG).

It belongs to the triosephosphate isomerase family. As to quaternary structure, homodimer.

The protein resides in the cytoplasm. It carries out the reaction D-glyceraldehyde 3-phosphate = dihydroxyacetone phosphate. It functions in the pathway carbohydrate biosynthesis; gluconeogenesis. The protein operates within carbohydrate degradation; glycolysis; D-glyceraldehyde 3-phosphate from glycerone phosphate: step 1/1. Its function is as follows. Involved in the gluconeogenesis. Catalyzes stereospecifically the conversion of dihydroxyacetone phosphate (DHAP) to D-glyceraldehyde-3-phosphate (G3P). The protein is Triosephosphate isomerase of Hydrogenovibrio crunogenus (strain DSM 25203 / XCL-2) (Thiomicrospira crunogena).